Reading from the N-terminus, the 743-residue chain is Serine/threonine-protein kinase GD17699 (743 aa).

A disordered region spans residues 54–78 (NVQEDNSYNRDCDSPVSSSSEPEKE). Doublecortin domains lie at 154 to 240 (LRIK…VEYN) and 309 to 392 (RIVT…AEDF). In terms of domain architecture, Protein kinase spans 473–731 (YTLGRIIGDG…SEDILDHPWT (259 aa)). Residues 479 to 487 (IGDGNFAIV) and Lys502 contribute to the ATP site. The Proton acceptor role is filled by Asp594.

It belongs to the protein kinase superfamily. CAMK Ser/Thr protein kinase family. CaMK subfamily.

It carries out the reaction L-seryl-[protein] + ATP = O-phospho-L-seryl-[protein] + ADP + H(+). The enzyme catalyses L-threonyl-[protein] + ATP = O-phospho-L-threonyl-[protein] + ADP + H(+). This Drosophila simulans (Fruit fly) protein is Serine/threonine-protein kinase GD17699.